A 351-amino-acid chain; its full sequence is MQVEVKLKENAYKVYIDELEELEFDSKVFILSNPKISGLHLKTLLSKIKAKEIFIATVKDGEEYKNLSTMEEILNQMFNSKLDRKSVLISFGGGVISDMGGFAASIYQRGIDFINIPTTLLACVDAAVGGKTGVNNNFGKNLIGTFYQPKAVYCESFFLKTLSSRELAAGMAEFIKMAAMFDYSILDFIEKIDEKSFLNATCENEIFTQIIAKSIELKSRVVEQDEKESRLRMLLNYGHTFAHVIENFTDYKLYLHGEAVAIGMVMANQLALNLGLLDKMQSQRIKDILLKFGLPISYKINNVDEFYEAFFMDKKSSNKKINFVLASPLGKGLIKGDISKEDIIATLREFQ.

Residues 60-65 (DGEEYK), 94-98 (GVISD), 118-119 (TT), lysine 131, lysine 140, and 158-161 (FLKT) each bind NAD(+). Residues glutamate 173, histidine 239, and histidine 256 each contribute to the Zn(2+) site.

This sequence belongs to the sugar phosphate cyclases superfamily. Dehydroquinate synthase family. NAD(+) is required as a cofactor. It depends on Co(2+) as a cofactor. The cofactor is Zn(2+).

Its subcellular location is the cytoplasm. The enzyme catalyses 7-phospho-2-dehydro-3-deoxy-D-arabino-heptonate = 3-dehydroquinate + phosphate. Its pathway is metabolic intermediate biosynthesis; chorismate biosynthesis; chorismate from D-erythrose 4-phosphate and phosphoenolpyruvate: step 2/7. Its function is as follows. Catalyzes the conversion of 3-deoxy-D-arabino-heptulosonate 7-phosphate (DAHP) to dehydroquinate (DHQ). The chain is 3-dehydroquinate synthase from Campylobacter jejuni subsp. jejuni serotype O:2 (strain ATCC 700819 / NCTC 11168).